A 225-amino-acid polypeptide reads, in one-letter code: J-type co-chaperone jac1, mitochondrial (225 aa).

Residues Met-1–His-49 constitute a mitochondrion transit peptide. The J domain occupies Asn-61–Leu-137. Residues His-98–Asp-100 carry the HSP70 binding motif.

This sequence belongs to the HscB family. Interacts with ssc1.

The protein localises to the mitochondrion matrix. Co-chaperone required for the assembly of iron-sulfur (Fe/S) clusters in mitochondria. Stimulates the ATPase activity of the mitochondrial Hsp70 chaperone ssc1, to mediate the transfer of iron-sulfur clusters from isu1 to grx5. The protein is J-type co-chaperone jac1, mitochondrial of Schizosaccharomyces pombe (strain 972 / ATCC 24843) (Fission yeast).